We begin with the raw amino-acid sequence, 162 residues long: MRIGLYPGTFDPVTNGHLDIIGRAVKLVDKLVIGVAVNIGKGPLFTLEERVATLERETAHLTKIAQIEVRPFDTLLMYFAREVGAQMIVRGLRAVADFEYEFQMTAMNQQLDREIETVFLMADPRHQAIASRLVKEIAALGGDVHKFVPPGVAEQLLAKLAK.

Substrate is bound at residue T9. ATP contacts are provided by residues 9 to 10 (TF) and H17. Positions 41, 76, and 90 each coordinate substrate. ATP contacts are provided by residues 91–93 (GLR), E101, and 126–132 (HQAIASR).

This sequence belongs to the bacterial CoaD family. In terms of assembly, homohexamer. Mg(2+) serves as cofactor.

It localises to the cytoplasm. It catalyses the reaction (R)-4'-phosphopantetheine + ATP + H(+) = 3'-dephospho-CoA + diphosphate. Its pathway is cofactor biosynthesis; coenzyme A biosynthesis; CoA from (R)-pantothenate: step 4/5. Its function is as follows. Reversibly transfers an adenylyl group from ATP to 4'-phosphopantetheine, yielding dephospho-CoA (dPCoA) and pyrophosphate. In Caulobacter sp. (strain K31), this protein is Phosphopantetheine adenylyltransferase.